The chain runs to 460 residues: Chromosomal replication initiator protein DnaA 2 (460 aa).

The tract at residues 1–68 (MRAWEDFLLL…KTSLVNNNGK (68 aa)) is domain I, interacts with DnaA modulators. The domain II stretch occupies residues 68 to 102 (KLIRVHITSLDKTAPFYKEKQIQQEKTAYFTMQYG). A domain III, AAA+ region region spans residues 103 to 321 (NVNPEMTFGN…DALKLLSKRV (219 aa)). Residues glycine 151, glycine 153, lysine 154, and threonine 155 each coordinate ATP. The domain IV, binds dsDNA stretch occupies residues 322-460 (AYKKLAQQLL…EFFPEEEISC (139 aa)).

The protein belongs to the DnaA family. As to quaternary structure, oligomerizes as a right-handed, spiral filament on DNA at oriC.

The protein localises to the cytoplasm. Functionally, plays an essential role in the initiation and regulation of chromosomal replication. ATP-DnaA binds to the origin of replication (oriC) to initiate formation of the DNA replication initiation complex once per cell cycle. Binds the DnaA box (a 9 base pair repeat at the origin) and separates the double-stranded (ds)DNA. Forms a right-handed helical filament on oriC DNA; dsDNA binds to the exterior of the filament while single-stranded (ss)DNA is stabiized in the filament's interior. The ATP-DnaA-oriC complex binds and stabilizes one strand of the AT-rich DNA unwinding element (DUE), permitting loading of DNA polymerase. After initiation quickly degrades to an ADP-DnaA complex that is not apt for DNA replication. Binds acidic phospholipids. This chain is Chromosomal replication initiator protein DnaA 2, found in Chlamydia caviae (strain ATCC VR-813 / DSM 19441 / 03DC25 / GPIC) (Chlamydophila caviae).